The primary structure comprises 101 residues: MAKQSMIARDVKRAKLADKFYAKREELKKIISDANSSDEDRWAAVLKLQTLPRDSSPSRQRNRCRQTGRPHGVLRKFGLSRIKVREAAMRGEIPGLKKASW.

The protein belongs to the universal ribosomal protein uS14 family. Part of the 30S ribosomal subunit. Contacts proteins S3 and S10.

Its function is as follows. Binds 16S rRNA, required for the assembly of 30S particles and may also be responsible for determining the conformation of the 16S rRNA at the A site. This chain is Small ribosomal subunit protein uS14, found in Actinobacillus pleuropneumoniae serotype 5b (strain L20).